Consider the following 383-residue polypeptide: Lipid-A-disaccharide synthase (383 aa).

This sequence belongs to the LpxB family.

It catalyses the reaction a lipid X + a UDP-2-N,3-O-bis[(3R)-3-hydroxyacyl]-alpha-D-glucosamine = a lipid A disaccharide + UDP + H(+). It functions in the pathway bacterial outer membrane biogenesis; LPS lipid A biosynthesis. Condensation of UDP-2,3-diacylglucosamine and 2,3-diacylglucosamine-1-phosphate to form lipid A disaccharide, a precursor of lipid A, a phosphorylated glycolipid that anchors the lipopolysaccharide to the outer membrane of the cell. This is Lipid-A-disaccharide synthase from Anaeromyxobacter dehalogenans (strain 2CP-C).